Reading from the N-terminus, the 361-residue chain is Phospho-N-acetylmuramoyl-pentapeptide-transferase (361 aa).

The next 10 membrane-spanning stretches (helical) occupy residues 26-46, 73-93, 98-118, 139-159, 168-188, 200-220, 237-257, 264-284, 289-309, and 339-359; these read SILA…VLIQ, TMGG…WGDL, VWLV…DDWI, IFGL…AAVT, IALP…IVGF, GLAI…AYAS, AGDL…FLWF, VFMG…IAVI, LVLV…IIQV, and VIVR…ATLK.

It belongs to the glycosyltransferase 4 family. MraY subfamily. Mg(2+) serves as cofactor.

It localises to the cell inner membrane. It carries out the reaction UDP-N-acetyl-alpha-D-muramoyl-L-alanyl-gamma-D-glutamyl-meso-2,6-diaminopimeloyl-D-alanyl-D-alanine + di-trans,octa-cis-undecaprenyl phosphate = di-trans,octa-cis-undecaprenyl diphospho-N-acetyl-alpha-D-muramoyl-L-alanyl-D-glutamyl-meso-2,6-diaminopimeloyl-D-alanyl-D-alanine + UMP. It functions in the pathway cell wall biogenesis; peptidoglycan biosynthesis. Its function is as follows. Catalyzes the initial step of the lipid cycle reactions in the biosynthesis of the cell wall peptidoglycan: transfers peptidoglycan precursor phospho-MurNAc-pentapeptide from UDP-MurNAc-pentapeptide onto the lipid carrier undecaprenyl phosphate, yielding undecaprenyl-pyrophosphoryl-MurNAc-pentapeptide, known as lipid I. In Xylella fastidiosa (strain 9a5c), this protein is Phospho-N-acetylmuramoyl-pentapeptide-transferase.